The following is a 70-amino-acid chain: DNA-directed RNA polymerase subunit omega (70 aa).

Belongs to the RNA polymerase subunit omega family. As to quaternary structure, the RNAP catalytic core consists of 2 alpha, 1 beta, 1 beta' and 1 omega subunit. When a sigma factor is associated with the core the holoenzyme is formed, which can initiate transcription.

The enzyme catalyses RNA(n) + a ribonucleoside 5'-triphosphate = RNA(n+1) + diphosphate. Functionally, promotes RNA polymerase assembly. Latches the N- and C-terminal regions of the beta' subunit thereby facilitating its interaction with the beta and alpha subunits. The protein is DNA-directed RNA polymerase subunit omega of Staphylococcus epidermidis (strain ATCC 12228 / FDA PCI 1200).